A 1343-amino-acid chain; its full sequence is DNA-directed RNA polymerase subunit beta (1343 aa).

Belongs to the RNA polymerase beta chain family. In terms of assembly, the RNAP catalytic core consists of 2 alpha, 1 beta, 1 beta' and 1 omega subunit. When a sigma factor is associated with the core the holoenzyme is formed, which can initiate transcription.

It carries out the reaction RNA(n) + a ribonucleoside 5'-triphosphate = RNA(n+1) + diphosphate. DNA-dependent RNA polymerase catalyzes the transcription of DNA into RNA using the four ribonucleoside triphosphates as substrates. This Shewanella piezotolerans (strain WP3 / JCM 13877) protein is DNA-directed RNA polymerase subunit beta.